The sequence spans 160 residues: Cyclic pyranopterin monophosphate synthase (160 aa).

Residues 74-76 and 112-113 contribute to the substrate site; these read LSH and ME. D127 is a catalytic residue.

It belongs to the MoaC family. Homohexamer; trimer of dimers.

The catalysed reaction is (8S)-3',8-cyclo-7,8-dihydroguanosine 5'-triphosphate = cyclic pyranopterin phosphate + diphosphate. Its pathway is cofactor biosynthesis; molybdopterin biosynthesis. Catalyzes the conversion of (8S)-3',8-cyclo-7,8-dihydroguanosine 5'-triphosphate to cyclic pyranopterin monophosphate (cPMP). The protein is Cyclic pyranopterin monophosphate synthase of Geotalea uraniireducens (strain Rf4) (Geobacter uraniireducens).